Consider the following 413-residue polypeptide: Histidine--tRNA ligase (413 aa).

This sequence belongs to the class-II aminoacyl-tRNA synthetase family. As to quaternary structure, homodimer.

It is found in the cytoplasm. It catalyses the reaction tRNA(His) + L-histidine + ATP = L-histidyl-tRNA(His) + AMP + diphosphate + H(+). This Geobacter sulfurreducens (strain ATCC 51573 / DSM 12127 / PCA) protein is Histidine--tRNA ligase.